We begin with the raw amino-acid sequence, 114 residues long: Kininogen-2 (114 aa).

A signal peptide spans 1–23 (MRLWFCLSFFIVLCLEHFPGTLA). Residues 35 to 45 (TRLHGHHKPSR) are compositionally biased toward basic residues. The interval 35–114 (TRLHGHHKPS…QIPGLGPLRG (80 aa)) is disordered. Residues 65–80 (PESEEKTEQFLRDLPK) are compositionally biased toward basic and acidic residues. Arg113 carries the arginine amide modification.

Belongs to the bradykinin-related peptide family. In terms of tissue distribution, expressed by the skin glands.

The protein localises to the secreted. In terms of biological role, potent vasodilator. Binds B1 (BDKRB1) and B2 (BDKRB2) bradykinin receptors. The protein is Kininogen-2 of Bombina maxima (Giant fire-bellied toad).